A 106-amino-acid chain; its full sequence is MADSGCWRPPRDCDDYWSEWKHCKSLRNRFHNYYTYGKAPECQEWKRDYMTCRDWEKTKSNNLKEALQQSEKTRLEGKQNNSPVWTLRKNPPPDWYLPLDPGKPRQ.

A disordered region spans residues 67 to 106 (LQQSEKTRLEGKQNNSPVWTLRKNPPPDWYLPLDPGKPRQ).

This sequence belongs to the UPF0545 family. Rapidly degraded by proteolysis following neuronal stimulation, resulting in increased AMPA receptor clustering.

The protein localises to the synapse. It localises to the synaptic cleft. Negatively regulates long-term potentiation and modulates adult synaptic plasticity. The polypeptide is Synaptic plasticity regulator PANTS (Xenopus laevis (African clawed frog)).